The chain runs to 103 residues: UPF0145 protein BCE_5284 (103 aa).

It belongs to the UPF0145 family.

The protein is UPF0145 protein BCE_5284 of Bacillus cereus (strain ATCC 10987 / NRS 248).